Here is a 62-residue protein sequence, read N- to C-terminus: Large ribosomal subunit protein bL28 (62 aa).

It belongs to the bacterial ribosomal protein bL28 family.

In Aliarcobacter butzleri (strain RM4018) (Arcobacter butzleri), this protein is Large ribosomal subunit protein bL28.